The chain runs to 309 residues: Protein FdhE homolog (309 aa).

This sequence belongs to the FdhE family.

Its subcellular location is the cytoplasm. Functionally, necessary for formate dehydrogenase activity. This Klebsiella pneumoniae (strain 342) protein is Protein FdhE homolog.